The chain runs to 281 residues: 18S rRNA (guanine-N(7))-methyltransferase (281 aa).

Residues 256–281 (KARRRRQGKEVCPDTQYTGRKRKPRF) form a disordered region.

This sequence belongs to the class I-like SAM-binding methyltransferase superfamily. BUD23/WBSCR22 family. In terms of assembly, heterodimer with TRMT112; this heterodimerization is necessary for the metabolic stability and activity of the catalytic subunit BUD23. Interacts with GRIP1. May be ubiquitinated and targeted to degradation in response to pro-inflammatory cytokine signaling.

Its subcellular location is the nucleus. It is found in the nucleoplasm. The protein resides in the cytoplasm. It localises to the perinuclear region. The enzyme catalyses a guanosine in 18S rRNA + S-adenosyl-L-methionine = an N(7)-methylguanosine in 18S rRNA + S-adenosyl-L-homocysteine. In terms of biological role, S-adenosyl-L-methionine-dependent methyltransferase that specifically methylates the N(7) position of a guanine in 18S rRNA. Requires the methyltransferase adapter protein TRM112 for full rRNA methyltransferase activity. Involved in the pre-rRNA processing steps leading to small-subunit rRNA production independently of its RNA-modifying catalytic activity. Important for biogenesis end export of the 40S ribosomal subunit independent on its methyltransferase activity. Locus-specific steroid receptor coactivator. Potentiates transactivation by glucocorticoid (NR3C1), mineralocorticoid (NR3C2), androgen (AR) and progesterone (PGR) receptors. Required for the maintenance of open chromatin at the TSC22D3/GILZ locus to facilitate NR3C1 loading on the response elements. Required for maintenance of dimethylation on histone H3 'Lys-79' (H3K79me2), although direct histone methyltransferase activity is not observed in vitro. The sequence is that of 18S rRNA (guanine-N(7))-methyltransferase from Bos taurus (Bovine).